The chain runs to 450 residues: Trigger factor (450 aa).

The PPIase FKBP-type domain occupies glutamate 163–proline 249. Positions proline 431–aspartate 443 are enriched in acidic residues. A disordered region spans residues proline 431–glutamine 450.

This sequence belongs to the FKBP-type PPIase family. Tig subfamily.

Its subcellular location is the cytoplasm. It carries out the reaction [protein]-peptidylproline (omega=180) = [protein]-peptidylproline (omega=0). Involved in protein export. Acts as a chaperone by maintaining the newly synthesized protein in an open conformation. Functions as a peptidyl-prolyl cis-trans isomerase. This chain is Trigger factor, found in Desulforapulum autotrophicum (strain ATCC 43914 / DSM 3382 / VKM B-1955 / HRM2) (Desulfobacterium autotrophicum).